The chain runs to 412 residues: Isocitrate dehydrogenase [NADP] cytoplasmic (412 aa).

Residues 75-77 and arginine 82 contribute to the NADP(+) site; that span reads TIT. Position 77 (threonine 77) interacts with substrate. Substrate is bound by residues 94-100, arginine 109, and arginine 132; that span reads SPNGTIR. Aspartate 252 provides a ligand contact to Mn(2+). Position 260 (lysine 260) interacts with NADP(+). Aspartate 275 serves as a coordination point for Mn(2+). NADP(+) contacts are provided by residues 310–315 and asparagine 328; that span reads GTVTRH.

It belongs to the isocitrate and isopropylmalate dehydrogenases family. In terms of assembly, homodimer. Requires Mg(2+) as cofactor. It depends on Mn(2+) as a cofactor. Post-translationally, the N-terminus is blocked.

The protein localises to the cytoplasm. It catalyses the reaction D-threo-isocitrate + NADP(+) = 2-oxoglutarate + CO2 + NADPH. With respect to regulation, by catabolite repression. Functionally, may function in the production of NADPH for fatty acid and sterol synthesis. The protein is Isocitrate dehydrogenase [NADP] cytoplasmic (IDP2) of Saccharomyces cerevisiae (strain ATCC 204508 / S288c) (Baker's yeast).